Here is a 279-residue protein sequence, read N- to C-terminus: MAFQGTSRTLTQQSSAATSDDLQKILFSPEAIKKMATECDLGRHHWMRADNAISVRPLVPEVTHSRIASFFKSGYDVGELCSKGYMSVPQVLCAVTRTVSTDAEGSLRIYLADLGDKELSPIDGQCVSLHNHDLPALVSFQPTYDCPMETVGNRKRCFAVVIERHGYIGYTGTTASVCSNWQARFSSKNNNYTHIAAGKTLVLPFNRLAEQTKPSAVARLLKSQLNNIESSQYLLTNAKINQNARSESEELNVESPPAAIGSSSASRSEAFRPQVVNGL.

The disordered stretch occupies residues 246-279 (SESEELNVESPPAAIGSSSASRSEAFRPQVVNGL). Residues 254 to 268 (ESPPAAIGSSSASRS) are compositionally biased toward low complexity.

Belongs to the cucumovirus movement protein family.

It localises to the host cell junction. It is found in the host plasmodesma. Its function is as follows. Transports viral genome to neighboring plant cells directly through plasmosdesmata, without any budding. The movement protein allows efficient cell to cell propagation, by bypassing the host cell wall barrier. Acts by forming a tubular structure at the host plasmodesmata, enlarging it enough to allow free passage of virion capsids. The polypeptide is Movement protein (Cucumber mosaic virus (strain CS) (CMV)).